Consider the following 1272-residue polypeptide: MAQRRKITAIVGLEQYNAGLWRKIKSMLDKDAELVQLSDVDLEKQNPEAATAIREADCVFMSMINFKEQIDWFKEQLDQAINEKTIFIFESMPEAMALTKVGSYQVTEGKSGMPDMVKKIAKMLVKGRDEDALYGYMKLMKIMRTILPLVPNKAKDFKNWLMVYSYWLQPTPENIVNMFRLILREYFDSNVKVEPIVDVPNMGLYHPDAKEYFKDVKSFKSWSKKRGVNFDKSQKMALLFFRKHLLQEKTYIDNTIRTLEKHGVNVFPAFVMGVEGHVLVRDWLMKEKIDLLVNMMGFGLVGGPAGSTKPGTAADARHEILTGLDVPYMVAQPLLVQDFESWHELGVSPMQVTFTYSIPEMDGATAPVILGALQDGKVETVQERLDRLAILSKKWMRLRATSNRDKRVALVVYDYPPGLGKKATAALLDVPTTLLRILERLKKEGYNVGTLPESPTKLFEMLDRATDYQIMQNKPEAIKVSREKYNELATYHERERIEERWQAFPGEIAPVGSEEVFLGGLRLGNIYIGVQPRLGVQGDPMRLIFDKANTPHHQYISFYRWISREFDAHALVHVGMHGSVEWMPGLQTGLTGECWPDALLGEVPHFYIYPVNNPSESTIAKRRGLATMVSHVVPPLARAGLYKELPALKDLLADYRERNQAQGEDVEQVQEAIMTKAELLNLTDDCPRRPDEPFSDFVSRLYIYIVELENRLISNSLHVFGEAGPLESQIITITETIKNRGENGRSLPYIFIDTSGRNGHYGSYEEISSLSRKGDEAAIQLREWAENACREFVKQTMFDRKNPMQVFESVTGGGRMPEEDKPFIQRIIQEGAMMIQALSDNSSEMNSLVKVLDGGYIPSGPGGDLVRDGMNVLPSGRNIHSIDPWRIPSETAFKRGTLIADGLISKHVAENDGQYPETIAEVIWGLDTIKTKGEAVAVVIRLMGAEPAYDAFGKISHYNLTPLDKLGRPRVDVLMQLSPIFRDAFGILMDQLDRLVKDAAKADEPHEMNFIKKHVDEALAEGMDFEAATSRQFTQAPGAYGTYVDDMIEDSAWENEGDLDDLFIRRNSSAYGGGRKGEKQSEILQKLLGSVDRVVHQVDSTEFGISDIDHYFSSSGSLQLAARRRNTKTSDIKLNYVESFTSDIKLDEADKSLRVEYRSKLLNPKWFEGMLKHGHSGAGEISNRVTYMLGWDAVTKSVDDWVYKKTAETYALDPEMRERLATLNPQAIKNIVGRMLEAHGRGMWKADQSMIEELQEIYADLEDRLEGMADDD.

This sequence belongs to the Mg-chelatase subunit H family.

The catalysed reaction is protoporphyrin IX + Mg(2+) + ATP + H2O = Mg-protoporphyrin IX + ADP + phosphate + 3 H(+). It functions in the pathway porphyrin-containing compound metabolism; bacteriochlorophyll biosynthesis (light-independent). In terms of biological role, involved in bacteriochlorophyll pigment biosynthesis; introduces a magnesium ion into protoporphyrin IX to yield Mg-protoroporphyrin IX. In Chlorobaculum parvum (strain DSM 263 / NCIMB 8327) (Chlorobium vibrioforme subsp. thiosulfatophilum), this protein is Magnesium-chelatase subunit H (bchH).